We begin with the raw amino-acid sequence, 441 residues long: Zinc finger and BTB domain-containing protein 8A (441 aa).

A BTB domain is found at 24–92 (CDCSILVEGK…VYSGKLSLTG (69 aa)). 2 stretches are compositionally biased toward polar residues: residues 146-170 (ERSSFYSSGWQDESSSPRSHLSPDQ) and 178-197 (KSWSKYNYHPASQRNTQQPL). Residues 146–252 (ERSSFYSSGW…SEEQAQMNAE (107 aa)) form a disordered region. Phosphoserine is present on residues serine 161 and serine 167. Glycyl lysine isopeptide (Lys-Gly) (interchain with G-Cter in SUMO2) cross-links involve residues lysine 178, lysine 182, and lysine 199. The span at 198 to 208 (TKHEQRKDSIK) shows a compositional bias: basic and acidic residues. Residues 234-248 (SDSSSHASQSEEQAQ) show a composition bias toward low complexity. 2 consecutive C2H2-type zinc fingers follow at residues 282–304 (FKCPYCTHVVKRKADLKRHLRCH) and 310–333 (YPCQACGKRFSRLDHLSSHFRTIH). Lysine 437 is covalently cross-linked (Glycyl lysine isopeptide (Lys-Gly) (interchain with G-Cter in SUMO2)).

The protein resides in the nucleus. Its function is as follows. May be involved in transcriptional regulation. The chain is Zinc finger and BTB domain-containing protein 8A (ZBTB8A) from Bos taurus (Bovine).